A 91-amino-acid polypeptide reads, in one-letter code: Acylphosphatase (91 aa).

One can recognise an Acylphosphatase-like domain in the interval 6–91 (CMRCYISGRV…WEDYISFDVL (86 aa)). Catalysis depends on residues Arg-21 and Asn-39.

This sequence belongs to the acylphosphatase family.

The catalysed reaction is an acyl phosphate + H2O = a carboxylate + phosphate + H(+). This Legionella pneumophila (strain Corby) protein is Acylphosphatase (acyP).